The primary structure comprises 137 residues: Large ribosomal subunit protein uL16 (137 aa).

Belongs to the universal ribosomal protein uL16 family. In terms of assembly, part of the 50S ribosomal subunit.

Binds 23S rRNA and is also seen to make contacts with the A and possibly P site tRNAs. This Rhodopseudomonas palustris (strain BisA53) protein is Large ribosomal subunit protein uL16.